A 218-amino-acid polypeptide reads, in one-letter code: UPF0598 protein C8orf82 homolog (218 aa).

Belongs to the UPF0598 family.

In Mus musculus (Mouse), this protein is UPF0598 protein C8orf82 homolog.